The sequence spans 345 residues: Cysteinyl leukotriene receptor 2 (345 aa).

Over 1–43 (MERKLMSLLPSISLSEMEPNSTLGNHNSNRSCTTENFKREFYP) the chain is Extracellular. Asn-20 and Asn-29 each carry an N-linked (GlcNAc...) asparagine glycan. The chain crosses the membrane as a helical span at residues 44 to 64 (IVYLVIFIWGALGNGFSIYVF). The Cytoplasmic segment spans residues 65 to 73 (LKPYKKSTS). Residues 74-94 (VNVFMLNLAISDLLFTITLPF) traverse the membrane as a helical segment. At 95–124 (RVDYYLRGSNXIFGDTPCRIMSYSMYVNMY) the chain is on the extracellular side. A disulfide bridge links Cys-112 with Cys-188. A helical membrane pass occupies residues 125 to 145 (SSIYFLTVLSVVRFLATVHPF). Topologically, residues 146 to 154 (RLLHTTSIK) are cytoplasmic. The helical transmembrane segment at 155 to 175 (NAWILCGVIWIFIMASSTVLL) threads the bilayer. The Extracellular portion of the chain corresponds to 176-205 (KNGSEQKDNVTLCLELNSNKVTKLKTMNYV). N-linked (GlcNAc...) asparagine glycans are attached at residues Asn-177 and Asn-184. Residues 206-226 (ALVVGFVLPFGTLSICYLLII) form a helical membrane-spanning segment. Residues 227-246 (RALLKVEVPESGLRLSHRKA) lie on the Cytoplasmic side of the membrane. The chain crosses the membrane as a helical span at residues 247–267 (LITVIIALIIFLLCFLPYHVL). Topologically, residues 268–287 (RTLHLLEWKADKCKDRLHKA) are extracellular. A helical transmembrane segment spans residues 288-308 (VAVTLALAAANSCFNPFLYYF). Residues 309–345 (AGENFKDRLKSALRKGRPQKTRCGFSVCVWLKKETRV) lie on the Cytoplasmic side of the membrane.

This sequence belongs to the G-protein coupled receptor 1 family.

It localises to the cell membrane. In terms of biological role, receptor for cysteinyl leukotrienes. The response is mediated via a G-protein that activates a phosphatidylinositol-calcium second messenger system. The protein is Cysteinyl leukotriene receptor 2 (CYSLTR2) of Sus scrofa (Pig).